A 169-amino-acid chain; its full sequence is Ion-translocating oxidoreductase complex subunit B (169 aa).

The tract at residues 1-23 (MIISIIIFSILSFILGVIVSLVS) is hydrophobic. One can recognise a 4Fe-4S domain in the interval 30-89 (SNLSLINDIDELLPQMQCAQCGYPGCYAYSQAIVDGNENIYKCIPGGKEVVLKLENLLNK). Residues Cys47, Cys50, Cys55, Cys72, Cys116, Cys119, Cys122, Cys126, Cys146, Cys149, Cys152, and Cys156 each contribute to the [4Fe-4S] cluster site. 2 4Fe-4S ferredoxin-type domains span residues 107-136 (SIVEIDENNCVGCSKCRLVCPVDAVVGTYN) and 137-166 (FRHTVLIDSCTGCNLCIPLCPTNCIKKKIM).

It belongs to the 4Fe4S bacterial-type ferredoxin family. RnfB subfamily. As to quaternary structure, the complex is composed of six subunits: RnfA, RnfB, RnfC, RnfD, RnfE and RnfG. It depends on [4Fe-4S] cluster as a cofactor.

Its subcellular location is the cell inner membrane. Part of a membrane-bound complex that couples electron transfer with translocation of ions across the membrane. In Buchnera aphidicola subsp. Baizongia pistaciae (strain Bp), this protein is Ion-translocating oxidoreductase complex subunit B.